Here is a 329-residue protein sequence, read N- to C-terminus: Endonuclease 8-like 2 (329 aa).

Pro2 acts as the Schiff-base intermediate with DNA in catalysis. Glu3 acts as the Proton donor in catalysis. Lys50 serves as the catalytic Proton donor; for beta-elimination activity. Position 50 is an N6-acetyllysine (Lys50). Ser68 carries the post-translational modification Phosphoserine. Positions 88–112 are disordered; sequence GPSAQEPSAGPSGSGEPVPSRSAET. An N6-acetyllysine modification is found at Lys150. Asn227 lines the DNA pocket. The FPG-type zinc finger occupies 280–316; it reads QIYQKEQCPSGHQVMKETFGPPDGLQRLTWWCPQCQP. Arg306 serves as the catalytic Proton donor; for delta-elimination activity.

This sequence belongs to the FPG family. As to quaternary structure, binds EP300.

The protein localises to the nucleus. The catalysed reaction is 2'-deoxyribonucleotide-(2'-deoxyribose 5'-phosphate)-2'-deoxyribonucleotide-DNA = a 3'-end 2'-deoxyribonucleotide-(2,3-dehydro-2,3-deoxyribose 5'-phosphate)-DNA + a 5'-end 5'-phospho-2'-deoxyribonucleoside-DNA + H(+). With respect to regulation, acetylation of Lys-50 leads to loss of DNA nicking activity. Its function is as follows. Involved in base excision repair of DNA damaged by oxidation or by mutagenic agents. Has DNA glycosylase activity towards 5-hydroxyuracil and other oxidized derivatives of cytosine with a preference for mismatched double-stranded DNA (DNA bubbles). Has low or no DNA glycosylase activity towards thymine glycol, 2-hydroxyadenine, hypoxanthine and 8-oxoguanine. Has AP (apurinic/apyrimidinic) lyase activity and introduces nicks in the DNA strand. Cleaves the DNA backbone by beta-delta elimination to generate a single-strand break at the site of the removed base with both 3'- and 5'-phosphates. This chain is Endonuclease 8-like 2 (Neil2), found in Mus musculus (Mouse).